Here is a 3625-residue protein sequence, read N- to C-terminus: Spectinabilin polyketide synthase system protein NorA' (3625 aa).

Residues 33–459 form the Ketosynthase family 3 (KS3) 1 domain; that stretch reads REPVAVVSMA…GTNAHVILEQ (427 aa). Residues Cys206, His341, and His381 each act as for beta-ketoacyl synthase 1 activity in the active site. One can recognise a Malonyl-CoA:ACP transacylase (MAT) 1 domain in the interval 564–881; the sequence is LVFPGQGSQW…SLGELFAGGR (318 aa). Residues 930–1054 form an N-terminal hotdog fold 1 region; the sequence is HPWWGAVTEL…GTLTRTARPA (125 aa). The region spanning 930 to 1200 is the PKS/mFAS DH 1 domain; sequence HPWWGAVTEL…VRPLTPGSGA (271 aa). His962 functions as the Proton acceptor; for dehydratase activity 1 in the catalytic mechanism. A C-terminal hotdog fold 1 region spans residues 1066 to 1200; that stretch reads ADPLPVDRIY…VRPLTPGSGA (135 aa). The active-site Proton donor; for dehydratase activity 1 is the Asp1125. The Ketoreductase (KR) 1 domain occupies 1443–1620; the sequence is GTVLVTGAAG…LSLAWGLWAE (178 aa). The region spanning 1722-1797 is the Carrier 1 domain; the sequence is GAVLETVRAQ…SLAAHLLGRL (76 aa). An O-(pantetheine 4'-phosphoryl)serine modification is found at Ser1757. Residues 1815–2231 enclose the Ketosynthase family 3 (KS3) 2 domain; the sequence is DEPIAIIGMA…GTNAHVVLEQ (417 aa). Catalysis depends on for beta-ketoacyl synthase 2 activity residues Cys1978, His2113, and His2153. A Malonyl-CoA:ACP transacylase (MAT) 2 domain is found at 2336 to 2656; the sequence is VFVFPGQGAQ…VAEAHTRGIA (321 aa). Residues 2704-2829 are N-terminal hotdog fold 2; sequence HPLLGARMEL…GLLSEEEPAT (126 aa). A PKS/mFAS DH 2 domain is found at 2704-2981; it reads HPLLGARMEL…ARPVPAGQLR (278 aa). The Proton acceptor; for dehydratase activity 2 role is filled by His2736. The segment at 2842–2981 is C-terminal hotdog fold 2; it reads AEPIELVGFY…ARPVPAGQLR (140 aa). Asp2903 acts as the Proton donor; for dehydratase activity 2 in catalysis. The Ketoreductase (KR) 2 domain maps to 3182–3361; that stretch reads GTVLITGASG…QSLAWGLWSE (180 aa). Residues 3462–3537 enclose the Carrier 2 domain; that stretch reads RQLTDLVRAQ…ALAGHLSTRL (76 aa). Position 3497 is an O-(pantetheine 4'-phosphoryl)serine (Ser3497).

The spectinabilin polyketide synthase complex is composed of 4 proteins, NorA, NorA', NorB and NorC. The complex comprises 6 modules with a total of 28 catalytic domains catalyzing 7 chain elongations. NorA comprises one module, NorA' two modules, NorB one module and NorC two modules. Pantetheine 4'-phosphate serves as cofactor.

It catalyses the reaction 4-nitrobenzoyl-CoA + 6 (S)-methylmalonyl-CoA + malonyl-CoA + 6 NADPH + 12 H(+) = demethyldeoxyspectinabilin + 7 CO2 + 6 NADP(+) + 8 CoA + 5 H2O. It participates in antibiotic biosynthesis. The protein operates within polyketide biosynthesis. In terms of biological role, component of a type I modular polyketide synthase (PKS) that generates the backbone of the antibiotic spectinabilin (also known as neoaureothin), a nitroaryl-substituted polyketide metabolite. This PKS system accepts the unusual starter unit 4-nitrobenzoyl-CoA and extends it by 6 molecules of (S)-methylmalonyl-CoA and a single molecule of malonyl-CoA. The chain is Spectinabilin polyketide synthase system protein NorA' from Streptomyces orinoci (Streptoverticillium orinoci).